A 294-amino-acid chain; its full sequence is Shell matrix protein (294 aa).

Component of the organic matrix of calcified shell layers like nacre and prisms.

It localises to the secreted. In Mytilus californianus (California mussel), this protein is Shell matrix protein.